The following is a 314-amino-acid chain: Probable cell division protein WhiA (314 aa).

The H-T-H motif DNA-binding region spans 274 to 305 (SLAELGDRLEISKSGANHRMRKLKALEDMINA).

Belongs to the WhiA family.

In terms of biological role, involved in cell division and chromosome segregation. In Leuconostoc citreum (strain KM20), this protein is Probable cell division protein WhiA.